The chain runs to 427 residues: Serine/threonine-protein kinase ssn3 (427 aa).

In terms of domain architecture, Protein kinase spans 40-369; the sequence is YHIVGFISSG…AQEALEHPYF (330 aa). Residues 46–54 and Lys-70 contribute to the ATP site; that span reads ISSGTYGRV. Asp-172 functions as the Proton acceptor in the catalytic mechanism. A compositionally biased stretch (basic and acidic residues) spans 390–399; it reads RRVTQDDNDI. A disordered region spans residues 390–427; it reads RRVTQDDNDIRSGSLPGTKRSGLPDDSLLGRATKRLKE.

Belongs to the protein kinase superfamily. CMGC Ser/Thr protein kinase family. CDC2/CDKX subfamily. Component of the srb8-11 complex, a regulatory module of the Mediator complex. The cofactor is Mg(2+).

It is found in the nucleus. The enzyme catalyses L-seryl-[protein] + ATP = O-phospho-L-seryl-[protein] + ADP + H(+). It catalyses the reaction L-threonyl-[protein] + ATP = O-phospho-L-threonyl-[protein] + ADP + H(+). It carries out the reaction [DNA-directed RNA polymerase] + ATP = phospho-[DNA-directed RNA polymerase] + ADP + H(+). Its function is as follows. Component of the srb8-11 complex. The srb8-11 complex is a regulatory module of the Mediator complex which is itself involved in regulation of basal and activated RNA polymerase II-dependent transcription. The srb8-11 complex may be involved in the transcriptional repression of a subset of genes regulated by Mediator. It may inhibit the association of the Mediator complex with RNA polymerase II to form the holoenzyme complex. The srb8-11 complex phosphorylates the C-terminal domain (CTD) of the largest subunit of RNA polymerase II. The protein is Serine/threonine-protein kinase ssn3 (ssn3) of Aspergillus niger (strain ATCC MYA-4892 / CBS 513.88 / FGSC A1513).